We begin with the raw amino-acid sequence, 253 residues long: 5-oxoprolinase subunit A (253 aa).

Belongs to the LamB/PxpA family. Forms a complex composed of PxpA, PxpB and PxpC.

The enzyme catalyses 5-oxo-L-proline + ATP + 2 H2O = L-glutamate + ADP + phosphate + H(+). Functionally, catalyzes the cleavage of 5-oxoproline to form L-glutamate coupled to the hydrolysis of ATP to ADP and inorganic phosphate. The chain is 5-oxoprolinase subunit A from Chloroflexus aurantiacus (strain ATCC 29364 / DSM 637 / Y-400-fl).